The chain runs to 216 residues: Glycerol-3-phosphate acyltransferase (216 aa).

5 consecutive transmembrane segments (helical) span residues 5–25, 70–90, 118–138, 140–160, and 164–184; these read LIAL…FGLV, IAAA…AGAF, VVFW…AAIF, ISSL…LAWG, and VAIM…ANIS. Basic and acidic residues predominate over residues 192–201; that stretch reads PRIGGKKSET. The segment at 192–216 is disordered; sequence PRIGGKKSETSADVSDGDDPDTPAT. The segment covering 206-216 has biased composition (acidic residues); it reads SDGDDPDTPAT.

This sequence belongs to the PlsY family. As to quaternary structure, probably interacts with PlsX.

It is found in the cell inner membrane. It carries out the reaction an acyl phosphate + sn-glycerol 3-phosphate = a 1-acyl-sn-glycero-3-phosphate + phosphate. It participates in lipid metabolism; phospholipid metabolism. In terms of biological role, catalyzes the transfer of an acyl group from acyl-phosphate (acyl-PO(4)) to glycerol-3-phosphate (G3P) to form lysophosphatidic acid (LPA). This enzyme utilizes acyl-phosphate as fatty acyl donor, but not acyl-CoA or acyl-ACP. The protein is Glycerol-3-phosphate acyltransferase of Maricaulis maris (strain MCS10) (Caulobacter maris).